The primary structure comprises 780 residues: Kojibiose phosphorylase (780 aa).

354–355 (WD) is a binding site for substrate. The active-site Proton donor is the glutamate 496. 608-609 (KQ) is a substrate binding site.

Belongs to the glycosyl hydrolase 65 family.

The enzyme catalyses kojibiose + phosphate = beta-D-glucose 1-phosphate + D-glucose. Its function is as follows. Catalyzes the reversible phosphorolysis of kojibiose into beta-D-glucose 1-phosphate (Glc1P) and D-glucose. In the reverse direction, uses Glc1P as acceptor to produce alpha-1,2-glucans up to a degree of polymerization of 6. The polypeptide is Kojibiose phosphorylase (Halothermothrix orenii (strain H 168 / OCM 544 / DSM 9562)).